A 276-amino-acid polypeptide reads, in one-letter code: Orotidine 5'-phosphate decarboxylase (276 aa).

Substrate is bound by residues Asp-40, 62-64 (KTH), 93-102 (DRKFIDIGNT), Tyr-228, and Arg-246. Catalysis depends on Lys-95, which acts as the Proton donor.

The protein belongs to the OMP decarboxylase family.

It catalyses the reaction orotidine 5'-phosphate + H(+) = UMP + CO2. Its pathway is pyrimidine metabolism; UMP biosynthesis via de novo pathway; UMP from orotate: step 2/2. This Penicillium nalgiovense protein is Orotidine 5'-phosphate decarboxylase (pyrG).